The primary structure comprises 809 residues: Endoplasmin homolog (809 aa).

A signal peptide spans 1 to 18; that stretch reads MRKWALSCALLLVLLLTT. ATP is bound by residues N111, D155, N168, and F200. N111 carries N-linked (GlcNAc...) asparagine glycosylation. The segment covering 293 to 320 has biased composition (acidic residues); sequence VPADEEESNEEEESTTETTEEEETEDDE. The disordered stretch occupies residues 293–329; it reads VPADEEESNEEEESTTETTEEEETEDDEEKKPKTKTV. N410, N450, and N617 each carry an N-linked (GlcNAc...) asparagine glycan. Residues 766–809 form a disordered region; it reads SLDLSPDAAVEEEEEVEEPEVEEKESAKQEAEEPEHEQYDKDEL. A compositionally biased stretch (acidic residues) spans 774–788; that stretch reads AVEEEEEVEEPEVEE. Residues 789-809 are compositionally biased toward basic and acidic residues; that stretch reads KESAKQEAEEPEHEQYDKDEL. The short motif at 806-809 is the Prevents secretion from ER element; the sequence is KDEL.

This sequence belongs to the heat shock protein 90 family.

The protein resides in the endoplasmic reticulum lumen. In terms of biological role, may have a molecular chaperone role in the processing of secreted materials. This is Endoplasmin homolog from Hordeum vulgare (Barley).